A 407-amino-acid chain; its full sequence is Type II secretion system protein L (407 aa).

Topologically, residues Met1–Lys257 are cytoplasmic. A helical membrane pass occupies residues Val258–Phe275. Residues Gln276 to Lys407 lie on the Periplasmic side of the membrane.

The protein belongs to the GSP L family. As to quaternary structure, type II secretion system is composed of four main components: the outer membrane complex, the inner membrane complex, the cytoplasmic secretion ATPase and the periplasm-spanning pseudopilus. Forms homodimers. Interacts with EpsM/GspM. Interacts with EpsE/GspE and EpsF/GspF.

The protein resides in the cell inner membrane. Inner membrane component of the type II secretion system required for the energy-dependent secretion of extracellular factors such as proteases and toxins from the periplasm. Plays a role in the complex assembly and recruits EpsM resulting in a stable complex in the inner membrane. Provides thus a link between the energy-providing EpsE protein in the cytoplasm and the rest of the T2SS machinery. The chain is Type II secretion system protein L (epsL) from Vibrio cholerae serotype O1 (strain ATCC 39315 / El Tor Inaba N16961).